The sequence spans 338 residues: tRNA N6-adenosine threonylcarbamoyltransferase (338 aa).

His-111 and His-115 together coordinate Fe cation. Substrate is bound by residues 134-138, Asp-167, Gly-180, and Asn-272; that span reads LVSGG. Asp-300 contributes to the Fe cation binding site.

Belongs to the KAE1 / TsaD family. Fe(2+) is required as a cofactor.

The protein resides in the cytoplasm. It catalyses the reaction L-threonylcarbamoyladenylate + adenosine(37) in tRNA = N(6)-L-threonylcarbamoyladenosine(37) in tRNA + AMP + H(+). In terms of biological role, required for the formation of a threonylcarbamoyl group on adenosine at position 37 (t(6)A37) in tRNAs that read codons beginning with adenine. Is involved in the transfer of the threonylcarbamoyl moiety of threonylcarbamoyl-AMP (TC-AMP) to the N6 group of A37, together with TsaE and TsaB. TsaD likely plays a direct catalytic role in this reaction. This Shewanella baltica (strain OS155 / ATCC BAA-1091) protein is tRNA N6-adenosine threonylcarbamoyltransferase.